Here is a 1193-residue protein sequence, read N- to C-terminus: MTGQLVQYGRHRQRRSYARISEVLELPNLIEIQTSSYQWFLDEGLREMFQDISPIEDFTGNLSLEFIDYSLGEPKYPVEESKERDVTYSAPLRVKVRLINKETGEVKDQDVFMGDFPIMTDTGTFIINGAERVIVSQLVRSPSVYFSGKVDKNGKKGFTATVIPNRGAWLEYETDAKDVVYVRIDRTRKLPVTVLLRALGFGSDQEIIDLIGENEYLRNTLDKDNTENTDKALLEIYERLRPGEPPTVENAKSLLDSRFFDPKRYDLASVGRYKINKKLHIKNRLFNQRLAETLVDPETGEILAEKGAILDRRTLDKVLPYLENGIGFKKLYPNGGVVEDEVTLQSIKIYAPTDQEGEQTINVIGNAYIEEGVKNITPSDIIASISYFFNLLHGVGDTDDIDHLGNRRLRSVGELLQNQFRIGLSRMERVVRERMSIQDTNTITPQQLINIRPVIASIKEFFGSSQLSQFMDQTNPLAELTHKRRLSALGPGGLTRERAGMEVRDVHYSHYGRMCPIETPEGPNIGLINSLSSFAKVNRFGFIETPYRRVDPETGKVTPRIDYLTADEEDNYVVAQANARLNDDGSFVDDSIVARFRGENTVVPKDRVDYMDVSPKQVVSAATACIPFLENDDSNRALMGANMQRQAVPLMQPESPIVGTGMEYVSAKDSGAAVICRHPGIVERVEAKNIWVRRYEEVDGQKVKGNLDKYSLLKFVRSNQGTCYNQRPIVSVGDEVEKGEILADGPSMEKGELALGRNVMVGFMTWDGYNYEDAIIMSERLVKDDVYTSIHIEEYESEARDTKLGPEEITRDIPNVGEDALRNLDERGIIRVGAEVKDGDLLVGKVTPKGVTELTAEERLLHAIFGEKAREVRDTSLRVPHGGGGIILDVKVFNREDGDELPPGVNQLVRVYIVQKRKISEGDKMAGRHGNKGVISKILPEEDMPYLPDGTPIDIMLNPLGVPSRMNIGQVLELHLGMAARRLGLHVASPVFDGAREEDVWETLEEAGMSRDAKTVLYDGRTGEPFDNRVSVGIMYMIKLAHMVDDKLHARSTGPYSLVTQQPLGGKAQFGGQRFGEMEVWALEAYGAAYTLQEILTVKSDDVVGRVKTYEAIVKGDNVPEPGVPESFKVLIKELQSLGMDVKILSSDEEEIEMRDLEDDEDAKQNEGLSLPNDEESEELVSADAERDVVTKE.

The segment covering 1153 to 1162 (EMRDLEDDED) has biased composition (acidic residues). The tract at residues 1153-1193 (EMRDLEDDEDAKQNEGLSLPNDEESEELVSADAERDVVTKE) is disordered. Basic and acidic residues predominate over residues 1184 to 1193 (DAERDVVTKE).

It belongs to the RNA polymerase beta chain family. In terms of assembly, the RNAP catalytic core consists of 2 alpha, 1 beta, 1 beta' and 1 omega subunit. When a sigma factor is associated with the core the holoenzyme is formed, which can initiate transcription.

It catalyses the reaction RNA(n) + a ribonucleoside 5'-triphosphate = RNA(n+1) + diphosphate. Functionally, DNA-dependent RNA polymerase catalyzes the transcription of DNA into RNA using the four ribonucleoside triphosphates as substrates. The polypeptide is DNA-directed RNA polymerase subunit beta (Bacillus licheniformis (strain ATCC 14580 / DSM 13 / JCM 2505 / CCUG 7422 / NBRC 12200 / NCIMB 9375 / NCTC 10341 / NRRL NRS-1264 / Gibson 46)).